A 242-amino-acid chain; its full sequence is C-reactive protein 1.4 (242 aa).

A signal peptide spans 1–24 (MKTFHGPTFGTAVFLYLLLFLTSA). The 212-residue stretch at 30 to 241 (ITSKVKFPPS…GVVLSPNEIC (212 aa)) folds into the Pentraxin (PTX) domain. 2 residues coordinate phosphocholine: Thr-60 and Tyr-63. 2 disulfides stabilise this stretch: Cys-62–Cys-125 and Cys-112–Cys-144. Ca(2+) contacts are provided by Asp-85 and Asn-86. Asn-147 carries N-linked (GlcNAc...) asparagine glycosylation. Residues Glu-168, Gln-169, Asp-170, and Gln-180 each contribute to the Ca(2+) site. A disulfide bridge links Cys-207 with Cys-241.

Belongs to the pentraxin family. Homopentamer. Pentraxin (or pentaxin) have a discoid arrangement of 5 non-covalently bound subunits. It depends on Ca(2+) as a cofactor.

Its subcellular location is the secreted. Functionally, might serve the role of immunoglobulins. The sequence is that of C-reactive protein 1.4 from Limulus polyphemus (Atlantic horseshoe crab).